Reading from the N-terminus, the 33-residue chain is Ranatuerin-1T (33 aa).

The cysteines at positions 27 and 33 are disulfide-linked.

Expressed by the skin glands.

The protein resides in the secreted. In terms of biological role, antibacterial activity against Gram-positive bacterium S.aureus and Gram-negative bacterium E.coli. No activity against C.albicans. The sequence is that of Ranatuerin-1T from Rana temporaria (European common frog).